The following is a 777-amino-acid chain: Nuclear autoantigenic sperm protein (777 aa).

Position 2 is an N-acetylalanine (Ala-2). Residue Lys-34 is modified to N6-acetyllysine. A TPR 1 repeat occupies 44–77 (AKKLLGLGQKHLVMGDIPAAVNAFQEAASLLGKK). The histone-binding stretch occupies residues 117–128 (EEEEGEKTEEES). Thr-124 carries the post-translational modification Phosphothreonine. Residue Ser-128 is modified to Phosphoserine. Basic and acidic residues-rich tracts occupy residues 152–186 (MGEK…REDM), 227–259 (VTSK…EKGG), and 267–276 (IEEKPKEASK). A disordered region spans residues 152-496 (MGEKEAQKTE…ALENKSLQEN (345 aa)). Residues 211 to 244 (EEGKGAAAPEGLSEAEVTSKKPDQEIPGAEEGKS) form a histone-binding region. At Lys-243 the chain carries N6-acetyllysine. Ser-244 bears the Phosphoserine mark. Lys-285 is subject to N6-acetyllysine. Over residues 303–319 (DEPKEQVAASESERGKA) the composition is skewed to basic and acidic residues. Residue Ser-312 is modified to Phosphoserine. Low complexity predominate over residues 342–353 (AADASAAEAGSE). A phosphoserine mark is found at Ser-399, Ser-411, and Ser-440. A histone-binding region spans residues 458–501 (EQMKEGEETEGSEEEDKENDKAEETLNDSALENKSLQENEEEEI). Positions 464–474 (EETEGSEEEDK) are enriched in acidic residues. The residue at position 466 (Thr-466) is a Phosphothreonine. Residues Ser-469, Ser-486, and Ser-492 each carry the phosphoserine modification. Residues 484 to 493 (NDSALENKSL) are compositionally biased toward polar residues. TPR repeat units lie at residues 531–564 (AQAH…QEQY) and 573–606 (AETH…IEKR). Positions 593-648 (VAQFSKSIEVIEKRMAVLNEQMKEAEGSPTEYEKEIEELKELLPEIREKIEDAKES) form a coiled coil. Position 651 is a phosphoserine (Ser-651). Residues 667 to 681 (STSGFTPSGGSSSVS) show a composition bias toward low complexity. Positions 667–777 (STSGFTPSGG…AGATVESTAC (111 aa)) are disordered. Thr-672 is subject to Phosphothreonine. 2 positions are modified to phosphoserine: Ser-694 and Ser-695. The Nuclear localization signal signature appears at 705–711 (VRKKRKP). Residues 710–728 (KPEEESPRKDDAKKAKQEP) show a composition bias toward basic and acidic residues. Residue Ser-715 is modified to Phosphoserine. Lys-725 participates in a covalent cross-link: Glycyl lysine isopeptide (Lys-Gly) (interchain with G-Cter in SUMO1). Ser-734 is modified (phosphoserine).

It belongs to the NASP family. In terms of assembly, binds to linker H1 histones. Interacts with histones H2A, H2B, H3 and H4. Interacts with histone H3.3. Interacts with histones H3 and H4; NASP is a histone chaperone that stabilizes and maintains a soluble pool of histone H3-H4 dimers. Interacts with ASF1A and ASF1B; the interaction is probably indirect and mediated by H3-H4. Also binds to HSP90 in the cytoplasm. This interaction stimulates binding of NASP to H1-6/H1T.

It is found in the cytoplasm. Its subcellular location is the nucleus. Its function is as follows. Component of the histone chaperone network. Binds and stabilizes histone H3-H4 not bound to chromatin to maintain a soluble reservoir and modulate degradation by chaperone-mediated autophagy. Required for DNA replication, normal cell cycle progression and cell proliferation. Forms a cytoplasmic complex with HSP90 and H1 linker histones and stimulates HSP90 ATPase activity. NASP and H1 histone are subsequently released from the complex and translocate to the nucleus where the histone is released for binding to DNA. The polypeptide is Nuclear autoantigenic sperm protein (Bos taurus (Bovine)).